We begin with the raw amino-acid sequence, 98 residues long: Large ribosomal subunit protein uL23 (98 aa).

It belongs to the universal ribosomal protein uL23 family. As to quaternary structure, part of the 50S ribosomal subunit. Contacts protein L29, and trigger factor when it is bound to the ribosome.

Functionally, one of the early assembly proteins it binds 23S rRNA. One of the proteins that surrounds the polypeptide exit tunnel on the outside of the ribosome. Forms the main docking site for trigger factor binding to the ribosome. This Parafrankia sp. (strain EAN1pec) protein is Large ribosomal subunit protein uL23.